The chain runs to 378 residues: Cell death-related nuclease 6 (378 aa).

A signal peptide spans 1-17; it reads MIRQIILIVSLIGISNA. 3 N-linked (GlcNAc...) asparagine glycosylation sites follow: Asn-51, Asn-92, and Asn-111.

It belongs to the DNase II family.

Involved in apoptotic DNA degradation. This chain is Cell death-related nuclease 6 (crn-6), found in Caenorhabditis elegans.